The chain runs to 114 residues: T cell receptor beta variable 6-6 (114 aa).

Residues 1–21 (MSISLLCCAAFPLLWAGPVNA) form the signal peptide. Positions 22–114 (GVTQTPKFRI…TSVYFCASSY (93 aa)) constitute an Ig-like domain. Residues Cys-42 and Cys-110 are joined by a disulfide bond. N-linked (GlcNAc...) asparagine glycosylation occurs at Asn-84.

Alpha-beta TR is a heterodimer composed of an alpha and beta chain; disulfide-linked. The alpha-beta TR is associated with the transmembrane signaling CD3 coreceptor proteins to form the TR-CD3 (TcR or TCR). The assembly of alpha-beta TR heterodimers with CD3 occurs in the endoplasmic reticulum where a single alpha-beta TR heterodimer associates with one CD3D-CD3E heterodimer, one CD3G-CD3E heterodimer and one CD247 homodimer forming a stable octameric structure. CD3D-CD3E and CD3G-CD3E heterodimers preferentially associate with TR alpha and TR beta chains, respectively. The association of the CD247 homodimer is the last step of TcR assembly in the endoplasmic reticulum and is required for transport to the cell surface.

The protein localises to the cell membrane. V region of the variable domain of T cell receptor (TR) beta chain that participates in the antigen recognition. Alpha-beta T cell receptors are antigen specific receptors which are essential to the immune response and are present on the cell surface of T lymphocytes. Recognize peptide-major histocompatibility (MH) (pMH) complexes that are displayed by antigen presenting cells (APC), a prerequisite for efficient T cell adaptive immunity against pathogens. Binding of alpha-beta TR to pMH complex initiates TR-CD3 clustering on the cell surface and intracellular activation of LCK that phosphorylates the ITAM motifs of CD3G, CD3D, CD3E and CD247 enabling the recruitment of ZAP70. In turn ZAP70 phosphorylates LAT, which recruits numerous signaling molecules to form the LAT signalosome. The LAT signalosome propagates signal branching to three major signaling pathways, the calcium, the mitogen-activated protein kinase (MAPK) kinase and the nuclear factor NF-kappa-B (NF-kB) pathways, leading to the mobilization of transcription factors that are critical for gene expression and essential for T cell growth and differentiation. The T cell repertoire is generated in the thymus, by V-(D)-J rearrangement. This repertoire is then shaped by intrathymic selection events to generate a peripheral T cell pool of self-MH restricted, non-autoaggressive T cells. Post-thymic interaction of alpha-beta TR with the pMH complexes shapes TR structural and functional avidity. The sequence is that of T cell receptor beta variable 6-6 from Homo sapiens (Human).